The primary structure comprises 146 residues: D-aminoacyl-tRNA deacylase (146 aa).

A Gly-cisPro motif, important for rejection of L-amino acids motif is present at residues 137–138; it reads GP.

It belongs to the DTD family. In terms of assembly, homodimer.

It is found in the cytoplasm. It carries out the reaction glycyl-tRNA(Ala) + H2O = tRNA(Ala) + glycine + H(+). The enzyme catalyses a D-aminoacyl-tRNA + H2O = a tRNA + a D-alpha-amino acid + H(+). In terms of biological role, an aminoacyl-tRNA editing enzyme that deacylates mischarged D-aminoacyl-tRNAs. Also deacylates mischarged glycyl-tRNA(Ala), protecting cells against glycine mischarging by AlaRS. Acts via tRNA-based rather than protein-based catalysis; rejects L-amino acids rather than detecting D-amino acids in the active site. By recycling D-aminoacyl-tRNA to D-amino acids and free tRNA molecules, this enzyme counteracts the toxicity associated with the formation of D-aminoacyl-tRNA entities in vivo and helps enforce protein L-homochirality. This Bacillus cereus (strain G9842) protein is D-aminoacyl-tRNA deacylase.